The chain runs to 165 residues: Large ribosomal subunit protein uL10 (165 aa).

Belongs to the universal ribosomal protein uL10 family. As to quaternary structure, part of the ribosomal stalk of the 50S ribosomal subunit. The N-terminus interacts with L11 and the large rRNA to form the base of the stalk. The C-terminus forms an elongated spine to which L12 dimers bind in a sequential fashion forming a multimeric L10(L12)X complex.

Its function is as follows. Forms part of the ribosomal stalk, playing a central role in the interaction of the ribosome with GTP-bound translation factors. This is Large ribosomal subunit protein uL10 from Hamiltonella defensa subsp. Acyrthosiphon pisum (strain 5AT).